Consider the following 698-residue polypeptide: MAAADALANVRNIGIMAHIDAGKTTTTERILFYTGITYKIGEVHEGAAVMDWMAQEQERGITITSAATKCEWKGHTIQIIDTPGHVDFTVEVERSLRVLDGAVAVYDGVAGVEPQTENVWRQADKYNVPRMCFVNKLDRTGADFFRCVQMMVDRLNATPLVLQVPIGLESEHIGVVDLIGMRALTWRGETQKGEDYAVEEIPAELADVATEWREKLMETLADVDDAVMEKYLEGEEFSVEEIKAAIRRATIAGKANPVLCGSAFKNKGVQPMLDAVVDYLPSPLDVPAIEGTATDGETPMLRKPSTSEPFAGLAFKIQTDKHLGKLTYVRVYSGVVETGSQVVNSTKDRKERIGKIYQMHANKREERGSAKAGDIIAVQGLKQTTTGDTLCDPANPVILESMTFPEPVIEVAIEPKTKADQEKLSTAIQRLAEEDPTFRVKLDEETGQTVISGMGELHLDILVDRMRREFNVEANIGMPQVAYRETIRRKVEKVEYTHKKQTGGSGQYARVIISLEPLPLDNEAPTYEFANAVTGGRIPREFIPSVDAGAQDAMQYGILAGFPLVGVKLTLVDGQYHEVDSSEMAFKIAGSMVLKDAARKADPALLEPMMAVEVTTPEENMGDVIGDINSRRGIIQAMEERGGARVVRSLVPLSEMFGYVGDLRSKTQGRASFSMQFDSYAEVPASVAREIIAKATGE.

The tr-type G domain occupies 8 to 284 (ANVRNIGIMA…AVVDYLPSPL (277 aa)). Residues 17-24 (AHIDAGKT), 81-85 (DTPGH), and 135-138 (NKLD) contribute to the GTP site.

It belongs to the TRAFAC class translation factor GTPase superfamily. Classic translation factor GTPase family. EF-G/EF-2 subfamily.

It localises to the cytoplasm. Catalyzes the GTP-dependent ribosomal translocation step during translation elongation. During this step, the ribosome changes from the pre-translocational (PRE) to the post-translocational (POST) state as the newly formed A-site-bound peptidyl-tRNA and P-site-bound deacylated tRNA move to the P and E sites, respectively. Catalyzes the coordinated movement of the two tRNA molecules, the mRNA and conformational changes in the ribosome. The sequence is that of Elongation factor G from Salinispora tropica (strain ATCC BAA-916 / DSM 44818 / JCM 13857 / NBRC 105044 / CNB-440).